The following is a 722-amino-acid chain: Host cell factor 2 (722 aa).

Kelch repeat units follow at residues 34 to 79, 83 to 130, 207 to 255, and 257 to 303; these read LMII…GFVC, RILV…RLGH, KMYV…VIGN, and MYIF…VSDS. Fibronectin type-III domains are found at residues 359–460, 514–604, and 606–716; these read APSQ…VDSS, TPSN…TCTP, and FPGA…DQEK. Residues 398–476 form a disordered region; the sequence is ATSSDSSAAP…LAPNTSNNSS (79 aa). Residues 419–436 are compositionally biased toward polar residues; the sequence is QGSNSTLHNSVSDTVNST.

Binds KMT2A/MLL1. Component of the MLL1/MLL complex, at least composed of KMT2A/MLL1, ASH2L, RBBP5, DPY30, WDR5, MEN1, HCFC1 and HCFC2. Interacts with TASOR. In terms of tissue distribution, expressed in the spermatogonia, spermatocytes and ovary.

It localises to the cytoplasm. The protein resides in the nucleus. The chain is Host cell factor 2 (Hcfc2) from Mus musculus (Mouse).